We begin with the raw amino-acid sequence, 747 residues long: Kinesin-like protein KIF3B (747 aa).

Residue methionine 1 is modified to N-acetylmethionine. N-acetylserine; in Kinesin-like protein KIF3B, N-terminally processed is present on serine 2. The region spanning 9-340 (SVRVVVRCRP…LRYANRAKNI (332 aa)) is the Kinesin motor domain. 96 to 103 (GQTGTGKT) is an ATP binding site. The stretch at 346 to 579 (VNEDPKDALL…EQTQNELTRE (234 aa)) forms a coiled coil. 2 disordered regions span residues 374–412 (IGRRKRREKRREGGGSGGGGEEEEEEGEEGEEDGDDKDD) and 698–747 (IQVD…LVPK). Positions 393–411 (GEEEEEEGEEGEEDGDDKD) are enriched in acidic residues. Residues 580–747 (LKLKHLIIEN…YPQSRGLVPK (168 aa)) form a globular region. Residues 701–710 (DASSFESTAS) show a composition bias toward polar residues. Positions 711–721 (RKPKARPKSGR) are enriched in basic residues. The segment covering 722-735 (KSGSSSSSSGNPAS) has biased composition (low complexity).

Belongs to the TRAFAC class myosin-kinesin ATPase superfamily. Kinesin family. Kinesin II subfamily. As to quaternary structure, heterodimer of KIF3A and KIF3B. KIF3A/KIF3B heterodimer interacts with KIFAP3 forming a heterotrimeric (KIF3A/KIF3B/KIFAP3) complex. Interacts with the SMC3 subunit of the cohesin complex. Interacts directly with IFT20. Interacts with FLCN.

It is found in the cytoplasm. The protein localises to the cytoskeleton. The protein resides in the cell projection. It localises to the cilium. Its subcellular location is the dendritic spine. In terms of biological role, microtubule-based molecular motor that transport intracellular cargos, such as vesicles, organelles and protein complexes. Uses ATP hydrolysis to generate force to bind and move along the microtubule. Plays a role in cilia formation. Involved in photoreceptor integrity and opsin trafficking in rod photoreceptors. Transports vesicles containing N-methyl-D-aspartate (NMDA) receptor subunit GRIN2A into neuronal dendrites. In Mus musculus (Mouse), this protein is Kinesin-like protein KIF3B.